The following is a 479-amino-acid chain: Proline--tRNA ligase (479 aa).

It belongs to the class-II aminoacyl-tRNA synthetase family. ProS type 3 subfamily. As to quaternary structure, homodimer.

The protein resides in the cytoplasm. The enzyme catalyses tRNA(Pro) + L-proline + ATP = L-prolyl-tRNA(Pro) + AMP + diphosphate. Its function is as follows. Catalyzes the attachment of proline to tRNA(Pro) in a two-step reaction: proline is first activated by ATP to form Pro-AMP and then transferred to the acceptor end of tRNA(Pro). This is Proline--tRNA ligase from Agathobacter rectalis (strain ATCC 33656 / DSM 3377 / JCM 17463 / KCTC 5835 / VPI 0990) (Eubacterium rectale).